The chain runs to 117 residues: Nuclear transition protein 2 (117 aa).

Residues 1–117 (MDTKMQSLPT…KRRSSGRRYK (117 aa)) form a disordered region. Residues 7–26 (SLPTTHPHPHSSSRPQSHTS) show a composition bias toward low complexity. Residues histidine 12, histidine 14, histidine 16, histidine 24, cysteine 32, cysteine 34, cysteine 38, and cysteine 41 each contribute to the Zn(2+) site. Residues 44-53 (AGHAGSSSSP) show a composition bias toward low complexity. 2 stretches are compositionally biased toward basic residues: residues 60–77 (KHPK…RPSH) and 93–117 (SKRK…RRYK). The Nuclear localization signal signature appears at 90 to 98 (GKVSKRKAV). Serine 112 carries the post-translational modification Phosphoserine.

Belongs to the nuclear transition protein 2 family.

It is found in the nucleus. The protein localises to the chromosome. In terms of biological role, plays a key role in the replacement of histones to protamine in the elongating spermatids of mammals. In condensing spermatids, loaded onto the nucleosomes, where it promotes the recruitment and processing of protamines, which are responsible for histone eviction. The histone H2AB1-H2BC1/TH2B dimer is required for loading of TNP2 onto chromatin. The protein is Nuclear transition protein 2 of Mus musculus (Mouse).